A 307-amino-acid chain; its full sequence is Serine/threonine-protein phosphatase 4 catalytic subunit (307 aa).

Position 2 is an N-acetylalanine (Ala-2). Mn(2+) contacts are provided by Asp-54, His-56, Asp-82, and Asn-114. His-115 (proton donor) is an active-site residue. 2 residues coordinate Mn(2+): His-164 and His-238. Leu-307 carries the leucine methyl ester modification.

This sequence belongs to the PPP phosphatase family. PP-4 (PP-X) subfamily. As to quaternary structure, serine/threonine-protein phosphatase 4 (PP4) occurs in different assemblies of the catalytic and one or more regulatory subunits. Component of the PP4 complexes PPP4C-PPP4R1, PPP4C-PPP4R2, PPP4C-PPP4R2-PPP4R3A, PPP4C-PPP4R2-PPP4R3B and PPP4C-PPP4R4. The PPP4C-PPP4R2 complex appears to be a tetramer composed of 2 molecules of PPP4C and 2 molecules of PPP4R2. Interacts with REL, NFKB1/p50 and RELA. Interacts with SMN1 and GEMIN4. Interacts with IRS4 (phosphorylated). Interacts with SMEK1/PPP4R3A; the interaction requires PP4R2. Interacts with HDAC3. The cofactor is Mn(2+). In terms of processing, methylation at the C-terminal Leu-307 is critical for interactions with regulatory subunits and functions in DNA repair.

It is found in the cytoplasm. The protein localises to the nucleus. It localises to the cytoskeleton. The protein resides in the microtubule organizing center. Its subcellular location is the centrosome. The catalysed reaction is O-phospho-L-seryl-[protein] + H2O = L-seryl-[protein] + phosphate. It catalyses the reaction O-phospho-L-threonyl-[protein] + H2O = L-threonyl-[protein] + phosphate. Functionally, protein phosphatase that is involved in many processes such as microtubule organization at centrosomes, maturation of spliceosomal snRNPs, apoptosis, DNA repair, tumor necrosis factor (TNF)-alpha signaling, activation of c-Jun N-terminal kinase MAPK8, regulation of histone acetylation, DNA damage checkpoint signaling, NF-kappa-B activation and cell migration. The PPP4C-PPP4R1 PP4 complex may play a role in dephosphorylation and regulation of HDAC3. The PPP4C-PPP4R2-PPP4R3A PP4 complex specifically dephosphorylates H2AX phosphorylated on Ser-140 (gamma-H2AX) generated during DNA replication and required for DNA DSB repair. Dephosphorylates NDEL1 at CDK1 phosphorylation sites and negatively regulates CDK1 activity in interphase. In response to DNA damage, catalyzes RPA2 dephosphorylation, an essential step for DNA repair since it allows the efficient RPA2-mediated recruitment of RAD51 to chromatin. This Oryctolagus cuniculus (Rabbit) protein is Serine/threonine-protein phosphatase 4 catalytic subunit (PPP4C).